A 276-amino-acid chain; its full sequence is Dermonecrotic toxin LafSicTox-betaIE2 (276 aa).

The active site involves histidine 5. The Mg(2+) site is built by glutamate 25 and aspartate 27. Histidine 41 functions as the Nucleophile in the catalytic mechanism. Disulfide bonds link cysteine 45/cysteine 51 and cysteine 47/cysteine 189. Aspartate 85 serves as a coordination point for Mg(2+).

Belongs to the arthropod phospholipase D family. Class II subfamily. Mg(2+) is required as a cofactor. Expressed by the venom gland.

The protein localises to the secreted. It catalyses the reaction an N-(acyl)-sphingosylphosphocholine = an N-(acyl)-sphingosyl-1,3-cyclic phosphate + choline. The enzyme catalyses an N-(acyl)-sphingosylphosphoethanolamine = an N-(acyl)-sphingosyl-1,3-cyclic phosphate + ethanolamine. It carries out the reaction a 1-acyl-sn-glycero-3-phosphocholine = a 1-acyl-sn-glycero-2,3-cyclic phosphate + choline. The catalysed reaction is a 1-acyl-sn-glycero-3-phosphoethanolamine = a 1-acyl-sn-glycero-2,3-cyclic phosphate + ethanolamine. Its function is as follows. Dermonecrotic toxins cleave the phosphodiester linkage between the phosphate and headgroup of certain phospholipids (sphingolipid and lysolipid substrates), forming an alcohol (often choline) and a cyclic phosphate. This toxin acts on sphingomyelin (SM). It may also act on ceramide phosphoethanolamine (CPE), lysophosphatidylcholine (LPC) and lysophosphatidylethanolamine (LPE), but not on lysophosphatidylserine (LPS), and lysophosphatidylglycerol (LPG). It acts by transphosphatidylation, releasing exclusively cyclic phosphate products as second products. Induces dermonecrosis, hemolysis, increased vascular permeability, edema, inflammatory response, and platelet aggregation. In Loxosceles aff. spinulosa (strain GJB-2008) (Recluse spider), this protein is Dermonecrotic toxin LafSicTox-betaIE2.